A 257-amino-acid polypeptide reads, in one-letter code: UPF0246 protein CV_1250 (257 aa).

This sequence belongs to the UPF0246 family.

The sequence is that of UPF0246 protein CV_1250 from Chromobacterium violaceum (strain ATCC 12472 / DSM 30191 / JCM 1249 / CCUG 213 / NBRC 12614 / NCIMB 9131 / NCTC 9757 / MK).